The following is a 283-amino-acid chain: Cardiolipin synthase (CMP-forming) (283 aa).

A run of 3 helical transmembrane segments spans residues 83–103 (PFIG…LFAF), 155–175 (VSIA…ALFI), and 209–229 (LSKW…LLLL).

It belongs to the CDP-alcohol phosphatidyltransferase class-I family. May be found in a large complex. Mg(2+) serves as cofactor.

Its subcellular location is the mitochondrion inner membrane. It catalyses the reaction a CDP-1,2-diacyl-sn-glycerol + a 1,2-diacyl-sn-glycero-3-phospho-(1'-sn-glycerol) = a cardiolipin + CMP + H(+). In terms of biological role, catalyzes the synthesis of cardiolipin (CL) (diphosphatidylglycerol) by specifically transferring a phosphatidyl group from CDP-diacylglycerol to phosphatidylglycerol (PG). CL is a key phospholipid in mitochondrial membranes and plays important roles in maintaining the functional integrity and dynamics of mitochondria under both optimal and stress conditions. The sequence is that of Cardiolipin synthase (CMP-forming) (CRD1) from Saccharomyces cerevisiae (strain ATCC 204508 / S288c) (Baker's yeast).